The sequence spans 416 residues: Xyloglucan O-acetyltransferase 1 (416 aa).

Residues 1-14 (MGLNEQQNVPSQRK) are Cytoplasmic-facing. The helical; Signal-anchor for type II membrane protein transmembrane segment at 15–35 (IIVFIVLAFIPIALFRLCFNN) threads the bilayer. Topologically, residues 36-416 (PFSSIKDTSL…MIEMLRRWKV (381 aa)) are lumenal. 4 disulfides stabilise this stretch: Cys79/Cys129, Cys100/Cys165, Cys109/Cys395, and Cys318/Cys391. The N-linked (GlcNAc...) asparagine glycan is linked to Asn96. The GDS motif signature appears at 152–154 (GDS). Ser154 functions as the Nucleophile in the catalytic mechanism. N-linked (GlcNAc...) asparagine glycans are attached at residues Asn194, Asn269, and Asn319. Asp390 functions as the Proton donor in the catalytic mechanism. The short motif at 390–393 (DCLH) is the DXXH motif element. His393 serves as the catalytic Proton acceptor.

It belongs to the PC-esterase family. TBL subfamily.

The protein resides in the golgi apparatus membrane. In terms of biological role, xyloglucan acetyltransferase that catalyzes the acetylation of fucosylated Gal residues on xyloglucan side chains. Predominantly catalyze 6-O-monoacetylation of Gal residues in the Fuc-Gal-Xyl trisaccharide side chains of xyloglucan oligomers. Involved in xyloglucan specific O-acetylation in roots and rosette leaves. The sequence is that of Xyloglucan O-acetyltransferase 1 from Arabidopsis thaliana (Mouse-ear cress).